Reading from the N-terminus, the 662-residue chain is Chaperone protein dnaK1 (662 aa).

T198 carries the post-translational modification Phosphothreonine; by autocatalysis. The segment at 630–662 (DWDDDPWAAPSGPPRGRSLNRRDRDPWDDDFYR) is disordered. Over residues 649-662 (NRRDRDPWDDDFYR) the composition is skewed to basic and acidic residues.

It belongs to the heat shock protein 70 family.

In terms of biological role, acts as a chaperone. This chain is Chaperone protein dnaK1 (dnaK1), found in Parasynechococcus marenigrum (strain WH8102).